Reading from the N-terminus, the 142-residue chain is Nucleoside diphosphate kinase (142 aa).

The ATP site is built by lysine 11, phenylalanine 59, arginine 87, threonine 93, arginine 104, and asparagine 114. The active-site Pros-phosphohistidine intermediate is histidine 117.

This sequence belongs to the NDK family. In terms of assembly, homotetramer. Mg(2+) is required as a cofactor.

Its subcellular location is the cytoplasm. The catalysed reaction is a 2'-deoxyribonucleoside 5'-diphosphate + ATP = a 2'-deoxyribonucleoside 5'-triphosphate + ADP. It carries out the reaction a ribonucleoside 5'-diphosphate + ATP = a ribonucleoside 5'-triphosphate + ADP. In terms of biological role, major role in the synthesis of nucleoside triphosphates other than ATP. The ATP gamma phosphate is transferred to the NDP beta phosphate via a ping-pong mechanism, using a phosphorylated active-site intermediate. This Aeromonas salmonicida (strain A449) protein is Nucleoside diphosphate kinase.